We begin with the raw amino-acid sequence, 333 residues long: Succinylglutamate desuccinylase (333 aa).

H56, E59, and H149 together coordinate Zn(2+). Residue E214 is part of the active site.

It belongs to the AspA/AstE family. Succinylglutamate desuccinylase subfamily. Requires Zn(2+) as cofactor.

It catalyses the reaction N-succinyl-L-glutamate + H2O = L-glutamate + succinate. The protein operates within amino-acid degradation; L-arginine degradation via AST pathway; L-glutamate and succinate from L-arginine: step 5/5. Transforms N(2)-succinylglutamate into succinate and glutamate. This Chromobacterium violaceum (strain ATCC 12472 / DSM 30191 / JCM 1249 / CCUG 213 / NBRC 12614 / NCIMB 9131 / NCTC 9757 / MK) protein is Succinylglutamate desuccinylase.